A 600-amino-acid polypeptide reads, in one-letter code: Pescadillo homolog (600 aa).

A BRCT domain is found at 351-450 (PTSTLLSKFI…ELLPVSQYAP (100 aa)). Residues 454-600 (LPPHLSPWGD…AELGKLNKKN (147 aa)) form a disordered region. Acidic residues predominate over residues 478 to 509 (QGEEEEEEEEEIEGDEIEEDVEEEDEEEDEDL). Positions 478–600 (QGEEEEEEEE…AELGKLNKKN (123 aa)) form a coiled coil. A compositionally biased stretch (basic residues) spans 530–539 (KDKKSSKGKK). Composition is skewed to basic and acidic residues over residues 569 to 580 (IDKKEARQDDLT) and 588 to 600 (KTKA…NKKN).

Belongs to the pescadillo family. In terms of assembly, component of the NOP7 complex, composed of ERB1, NOP7 and YTM1. The complex is held together by ERB1, which interacts with NOP7 via its N-terminal domain and with YTM1 via a high-affinity interaction between the seven-bladed beta-propeller domains of the 2 proteins. The NOP7 complex associates with the 66S pre-ribosome.

It is found in the nucleus. The protein resides in the nucleolus. Its subcellular location is the nucleoplasm. Functionally, component of the NOP7 complex, which is required for maturation of the 25S and 5.8S ribosomal RNAs and formation of the 60S ribosome. The protein is Pescadillo homolog of Debaryomyces hansenii (strain ATCC 36239 / CBS 767 / BCRC 21394 / JCM 1990 / NBRC 0083 / IGC 2968) (Yeast).